Consider the following 630-residue polypeptide: Sodium-dependent serotonin transporter (630 aa).

2 stretches are compositionally biased toward polar residues: residues 1 to 11 and 42 to 55; these read METTPLNSQKV and QISN…STSA. The interval 1-63 is disordered; the sequence is METTPLNSQK…SAGDEAPHST (63 aa). The Cytoplasmic portion of the chain corresponds to 1 to 87; that stretch reads METTPLNSQK…ERETWGKKMD (87 aa). The residue at position 47 (Tyr-47) is a Phosphotyrosine. Residues 88 to 112 traverse the membrane as a helical segment; it reads FLLSVIGYAVDLGNIWRFPYICYQN. Residues Gly-94, Ala-96, Val-97, Asp-98, and Asn-101 each coordinate Na(+). Asp-98 serves as a coordination point for serotonin. The Extracellular segment spans residues 113 to 115; that stretch reads GGG. The helical transmembrane segment at 116 to 135 threads the bilayer; it reads AFLLPYTIMAIFGGIPLFYM. The Cytoplasmic segment spans residues 136-160; sequence ELALGQYHRNGCISIWKKICPIFKG. Tyr-142 carries the phosphotyrosine modification. Residues 161-186 form a helical membrane-spanning segment; it reads IGYAICIIAFYIASYYNTIIAWALYY. The Extracellular segment spans residues 187–252; sequence LISSFTDQLP…KGLQDLGTIS (66 aa). A disulfide bridge connects residues Cys-200 and Cys-209. 2 N-linked (GlcNAc...) asparagine glycosylation sites follow: Asn-208 and Asn-217. A helical transmembrane segment spans residues 253 to 271; sequence WQLALCIMLIFTIIYFSIW. At 272-277 the chain is on the cytoplasmic side; the sequence is KGVKTS. Thr-276 is modified (phosphothreonine). A helical membrane pass occupies residues 278–297; that stretch reads GKVVWVTATFPYIVLSVLLV. At 298–324 the chain is on the extracellular side; sequence RGATLPGAWRGVVFYLKPNWQKLLETG. Residues 325–347 form a helical membrane-spanning segment; sequence VWVDAAAQIFFSLGPGFGVLLAF. Ser-336 contributes to the Na(+) binding site. Residues 348-360 lie on the Cytoplasmic side of the membrane; sequence ASYNKFNNNCYQD. Residues 361 to 380 form a helical membrane-spanning segment; the sequence is ALVTSVVNCMTSFVSGFVIF. Asn-368 contacts Na(+). Topologically, residues 381–421 are extracellular; the sequence is TVLGYMAEMRNEDVSEVAKDAGPSLLFITYAEAIANMPAST. Residues 422–443 form a helical membrane-spanning segment; it reads FFAIIFFLMLITLGLDSTFAGL. Residues Leu-434, Asp-437, and Ser-438 each contribute to the Na(+) site. Thr-439 lines the serotonin pocket. The Cytoplasmic segment spans residues 444–463; it reads EGVITAVLDEFPHIWAKRRE. Residues 464–483 traverse the membrane as a helical segment; the sequence is WFVLIVVITCILGSLLTLTS. Over 484–494 the chain is Extracellular; it reads GGAYVVTLLEE. Residues Glu-494 and Tyr-495 each coordinate serotonin. A helical transmembrane segment spans residues 495-516; that stretch reads YATGPAVLTVALIEAVVVSWFY. The Cytoplasmic segment spans residues 517-538; the sequence is GITQFCSDVKEMLGFSPGWFWR. Residues 539 to 558 traverse the membrane as a helical segment; that stretch reads ICWVAISPLFLLFIICSFLM. Serotonin-binding residues include Phe-556 and Ser-559. At 559 to 574 the chain is on the extracellular side; sequence SPPQLRLFQYNYPHWS. A helical transmembrane segment spans residues 575–595; it reads IILGYCIGTSSVICIPIYIIY. Over 596-630 the chain is Cytoplasmic; sequence RLISTPGTLKERIIKSITPETPTEIPCGDIRMNAV. Positions 616–624 are interaction with RAB4A; it reads TPTEIPCGD.

This sequence belongs to the sodium:neurotransmitter symporter (SNF) (TC 2.A.22) family. SLC6A4 subfamily. In terms of assembly, monomer or homooligomer. Interacts (via C-terminus) with SCAMP2; the interaction is direct and retains transporter molecules intracellularly. Interacts with filamentous actin and STX1A. Interacts (via the N-terminus) with STX1A (via the H3 domain); this interaction regulates SLC4A6 channel conductance. Interacts with SEC23A, SEC24C and PATJ. Interacts with NOS1; the interaction may diminish the cell surface localization of SERT in the brain and, correspondingly, reduce serotonin reuptake. Interacts with TGFB1I1. Interacts with ITGAV:ITGB3. Interacts (via C-terminus) with ITGB3; this interaction regulates SLC6A4 trafficking. Phosphorylation at Thr-276 increases 5-HT uptake and is required for cGMP-mediated SERT regulation. As to expression, expressed in the lung, midbrain and brainstem regions. Expressed in brainstem raphe neurons.

Its subcellular location is the cell membrane. The protein resides in the endomembrane system. It localises to the endosome membrane. It is found in the synapse. The protein localises to the cell junction. Its subcellular location is the focal adhesion. The protein resides in the cell projection. It localises to the neuron projection. The enzyme catalyses serotonin(out) + K(+)(in) + Na(+)(out) + H(+)(in) = serotonin(in) + K(+)(out) + Na(+)(in) + H(+)(out). Serotonin transporter that cotransports serotonin with one Na(+) ion in exchange for one K(+) ion and possibly one proton in an overall electroneutral transport cycle. Transports serotonin across the plasma membrane from the extracellular compartment to the cytosol thus limiting serotonin intercellular signaling. Essential for serotonin homeostasis in the central nervous system. In the developing somatosensory cortex, acts in glutamatergic neurons to control serotonin uptake and its trophic functions accounting for proper spatial organization of cortical neurons and elaboration of sensory circuits. In the mature cortex, acts primarily in brainstem raphe neurons to mediate serotonin uptake from the synaptic cleft back into the pre-synaptic terminal thus terminating serotonin signaling at the synapse. Modulates mucosal serotonin levels in the gastrointestinal tract through uptake and clearance of serotonin in enterocytes. Required for enteric neurogenesis and gastrointestinal reflexes. Regulates blood serotonin levels by ensuring rapid high affinity uptake of serotonin from plasma to platelets, where it is further stored in dense granules via vesicular monoamine transporters and then released upon stimulation. Mechanistically, the transport cycle starts with an outward-open conformation having Na1(+) and Cl(-) sites occupied. The binding of a second extracellular Na2(+) ion and serotonin substrate leads to structural changes to outward-occluded to inward-occluded to inward-open, where the Na2(+) ion and serotonin are released into the cytosol. Binding of intracellular K(+) ion induces conformational transitions to inward-occluded to outward-open and completes the cycle by releasing K(+) possibly together with a proton bound to Asp-98 into the extracellular compartment. Na1(+) and Cl(-) ions remain bound throughout the transport cycle. Additionally, displays serotonin-induced channel-like conductance for monovalent cations, mainly Na(+) ions. The channel activity is uncoupled from the transport cycle and may contribute to the membrane resting potential or excitability. In Mus musculus (Mouse), this protein is Sodium-dependent serotonin transporter.